Consider the following 413-residue polypeptide: 5'-deoxyadenosine deaminase (413 aa).

Residues His57 and His59 each contribute to the Zn(2+) site. Glu86 and His171 together coordinate substrate. Zn(2+) is bound at residue His198. Substrate-binding residues include Glu201 and Asp286. Asp286 contacts Zn(2+).

This sequence belongs to the metallo-dependent hydrolases superfamily. MTA/SAH deaminase family. Homotetramer. It depends on Zn(2+) as a cofactor.

It carries out the reaction 5'-deoxyadenosine + H2O + H(+) = 5'-deoxyinosine + NH4(+). It catalyses the reaction S-adenosyl-L-homocysteine + H2O + H(+) = S-inosyl-L-homocysteine + NH4(+). The enzyme catalyses S-methyl-5'-thioadenosine + H2O + H(+) = S-methyl-5'-thioinosine + NH4(+). The catalysed reaction is adenosine + H2O + H(+) = inosine + NH4(+). The protein operates within amino-acid biosynthesis; S-adenosyl-L-methionine biosynthesis. Its function is as follows. Catalyzes the deamination of three SAM-derived enzymatic products, namely 5'-deoxyadenosine, S-adenosyl-L-homocysteine, and 5'-methylthioadenosine, to produce the inosine analogs. Can also deaminate adenosine. The preferred substrate for this enzyme is 5'-deoxyadenosine, but all these substrates are efficiently deaminated. Likely functions in a S-adenosyl-L-methionine (SAM) recycling pathway from S-adenosyl-L-homocysteine (SAH) produced from SAM-dependent methylation reactions. May also be involved in the recycling of 5'-deoxyadenosine, whereupon the 5'-deoxyribose moiety of 5'-deoxyinosine is further metabolized to deoxyhexoses used for the biosynthesis of aromatic amino acids in methanogens. The protein is 5'-deoxyadenosine deaminase of Methanothrix thermoacetophila (strain DSM 6194 / JCM 14653 / NBRC 101360 / PT) (Methanosaeta thermophila).